We begin with the raw amino-acid sequence, 398 residues long: Succinate--CoA ligase [ADP-forming] subunit beta (398 aa).

In terms of domain architecture, ATP-grasp spans Lys9–Glu254. ATP is bound by residues Lys46, Gly53–Gly55, Glu109, Ala112, and Glu117. Asn209 and Asp223 together coordinate Mg(2+). Substrate contacts are provided by residues Asn274 and Gly331 to Met333.

The protein belongs to the succinate/malate CoA ligase beta subunit family. As to quaternary structure, heterotetramer of two alpha and two beta subunits. Mg(2+) serves as cofactor.

The catalysed reaction is succinate + ATP + CoA = succinyl-CoA + ADP + phosphate. It carries out the reaction GTP + succinate + CoA = succinyl-CoA + GDP + phosphate. It participates in carbohydrate metabolism; tricarboxylic acid cycle; succinate from succinyl-CoA (ligase route): step 1/1. Succinyl-CoA synthetase functions in the citric acid cycle (TCA), coupling the hydrolysis of succinyl-CoA to the synthesis of either ATP or GTP and thus represents the only step of substrate-level phosphorylation in the TCA. The beta subunit provides nucleotide specificity of the enzyme and binds the substrate succinate, while the binding sites for coenzyme A and phosphate are found in the alpha subunit. In Bartonella quintana (strain Toulouse) (Rochalimaea quintana), this protein is Succinate--CoA ligase [ADP-forming] subunit beta.